Reading from the N-terminus, the 431-residue chain is Serine/threonine-protein kinase Sgk1 (431 aa).

A necessary for localization to the mitochondria region spans residues 1–60 (MTVKTEAARGPLTYSRMRGMVAILIAFMKQRRMGLNDFIQKIANNSYACKHTEVQSILKI). Positions 66 to 92 (PELMNANPSPPPSPSQQINLGPSSNPH) are disordered. Position 74 is a phosphoserine (serine 74). Serine 78 carries the post-translational modification Phosphoserine; by MAPK7. Polar residues predominate over residues 81 to 91 (QQINLGPSSNP). In terms of domain architecture, Protein kinase spans 98 to 355 (FHFLKVIGKG…FMEIRNHVFF (258 aa)). Residues 104-112 (IGKGSFGKV) and lysine 127 contribute to the ATP site. The Nuclear localization signal motif lies at 131–141 (KKAILKKKEEK). Catalysis depends on aspartate 222, which acts as the Proton acceptor. Threonine 256 bears the Phosphothreonine; by PDPK1 mark. Positions 356 to 431 (SLINWDDLIN…SYAPPMDSFL (76 aa)) constitute an AGC-kinase C-terminal domain. A Phosphothreonine; by PKA modification is found at threonine 369. Phosphoserine occurs at positions 397, 401, and 422.

The protein belongs to the protein kinase superfamily. AGC Ser/Thr protein kinase family. Homodimer; disulfide-linked. Forms a trimeric complex with FBXW7 and NOTCH1. Interacts with MAPK3/ERK1, MAPK1/ERK2, MAP2K1/MEK1, MAP2K2/MEK2, NEDD4, NEDD4L, MAPT/TAU, MAPK7, CREB1, SLC9A3R2/NHERF2 and KCNJ1/ROMK1. Associates with the mammalian target of rapamycin complex 2 (mTORC2) via an interaction with MAPKAP1/SIN1. Post-translationally, regulated by phosphorylation. Activated by phosphorylation on Ser-422 by mTORC2, transforming it into a substrate for PDPK1 which phosphorylates it on Thr-256. Phosphorylation on Ser-397 and Ser-401 are also essential for its activity. Phosphorylation on Ser-78 by MAPK7 is required for growth factor-induced cell cycle progression. Ubiquitinated by NEDD4L; which promotes proteasomal degradation. Ubiquitinated by SYVN1 at the endoplasmic reticulum; which promotes rapid proteasomal degradation and maintains a high turnover rate in resting cells.

It is found in the cytoplasm. Its subcellular location is the nucleus. The protein resides in the endoplasmic reticulum membrane. The protein localises to the cell membrane. It localises to the mitochondrion. The catalysed reaction is L-seryl-[protein] + ATP = O-phospho-L-seryl-[protein] + ADP + H(+). It catalyses the reaction L-threonyl-[protein] + ATP = O-phospho-L-threonyl-[protein] + ADP + H(+). With respect to regulation, two specific sites, one in the kinase domain (Thr-256) and the other in the C-terminal regulatory region (Ser-422), need to be phosphorylated for its full activation. Phosphorylation at Ser-397 and Ser-401 are also essential for its activity. Activated by WNK1, WNK2, WNK3 and WNK4; which promote phosphorylation by mTORC2. Serine/threonine-protein kinase which is involved in the regulation of a wide variety of ion channels, membrane transporters, cellular enzymes, transcription factors, neuronal excitability, cell growth, proliferation, survival, migration and apoptosis. Plays an important role in cellular stress response. Contributes to regulation of renal Na(+) retention, renal K(+) elimination, salt appetite, gastric acid secretion, intestinal Na(+)/H(+) exchange and nutrient transport, insulin-dependent salt sensitivity of blood pressure, salt sensitivity of peripheral glucose uptake, cardiac repolarization and memory consolidation. Up-regulates Na(+) channels: SCNN1A/ENAC, SCN5A and ASIC1/ACCN2, K(+) channels: KCNJ1/ROMK1, KCNA1-5, KCNQ1-5 and KCNE1, epithelial Ca(2+) channels: TRPV5 and TRPV6, chloride channels: BSND, CLCN2 and CFTR, glutamate transporters: SLC1A3/EAAT1, SLC1A2 /EAAT2, SLC1A1/EAAT3, SLC1A6/EAAT4 and SLC1A7/EAAT5, amino acid transporters: SLC1A5/ASCT2, SLC38A1/SN1 and SLC6A19, creatine transporter: SLC6A8, Na(+)/dicarboxylate cotransporter: SLC13A2/NADC1, Na(+)-dependent phosphate cotransporter: SLC34A2/NAPI-2B, glutamate receptor: GRIK2/GLUR6. Up-regulates carriers: SLC9A3/NHE3, SLC12A1/NKCC2, SLC12A3/NCC, SLC5A3/SMIT, SLC2A1/GLUT1, SLC5A1/SGLT1 and SLC15A2/PEPT2. Regulates enzymes: GSK3A/B, PMM2 and Na(+)/K(+) ATPase, and transcription factors: CTNNB1 and nuclear factor NF-kappa-B. Stimulates sodium transport into epithelial cells by enhancing the stability and expression of SCNN1A/ENAC. This is achieved by phosphorylating the NEDD4L ubiquitin E3 ligase, promoting its interaction with 14-3-3 proteins, thereby preventing it from binding to SCNN1A/ENAC and targeting it for degradation. Regulates store-operated Ca(+2) entry (SOCE) by stimulating ORAI1 and STIM1. Regulates KCNJ1/ROMK1 directly via its phosphorylation or indirectly via increased interaction with SLC9A3R2/NHERF2. Phosphorylates MDM2 and activates MDM2-dependent ubiquitination of p53/TP53. Phosphorylates MAPT/TAU and mediates microtubule depolymerization and neurite formation in hippocampal neurons. Phosphorylates SLC2A4/GLUT4 and up-regulates its activity. Phosphorylates APBB1/FE65 and promotes its localization to the nucleus. Phosphorylates MAPK1/ERK2 and activates it by enhancing its interaction with MAP2K1/MEK1 and MAP2K2/MEK2. Phosphorylates FBXW7 and plays an inhibitory role in the NOTCH1 signaling. Phosphorylates FOXO1 resulting in its relocalization from the nucleus to the cytoplasm. Phosphorylates FOXO3, promoting its exit from the nucleus and interference with FOXO3-dependent transcription. Phosphorylates BRAF and MAP3K3/MEKK3 and inhibits their activity. Phosphorylates SLC9A3/NHE3 in response to dexamethasone, resulting in its activation and increased localization at the cell membrane. Phosphorylates CREB1. Necessary for vascular remodeling during angiogenesis. The protein is Serine/threonine-protein kinase Sgk1 (SGK1) of Oryctolagus cuniculus (Rabbit).